The chain runs to 242 residues: Triosephosphate isomerase (242 aa).

Residue 8–10 (NWK) participates in substrate binding. The Electrophile role is filled by H98. The Proton acceptor role is filled by E167. Substrate-binding positions include G173, S205, and 226-227 (GG).

It belongs to the triosephosphate isomerase family. As to quaternary structure, homodimer.

The protein resides in the cytoplasm. The enzyme catalyses D-glyceraldehyde 3-phosphate = dihydroxyacetone phosphate. Its pathway is carbohydrate biosynthesis; gluconeogenesis. The protein operates within carbohydrate degradation; glycolysis; D-glyceraldehyde 3-phosphate from glycerone phosphate: step 1/1. Functionally, involved in the gluconeogenesis. Catalyzes stereospecifically the conversion of dihydroxyacetone phosphate (DHAP) to D-glyceraldehyde-3-phosphate (G3P). This is Triosephosphate isomerase from Mesomycoplasma hyopneumoniae (strain 232) (Mycoplasma hyopneumoniae).